Reading from the N-terminus, the 983-residue chain is Poly [ADP-ribose] polymerase 1 (983 aa).

PARP-type zinc fingers lie at residues 8-91 (WRAE…ESGA) and 114-194 (YGIE…KKAL). Cys20, Cys23, His52, Cys55, Cys126, Cys129, His156, and Cys159 together coordinate Zn(2+). The tract at residues 197-246 (AKTETAEARQTNSRAGTKRKNDSVDNEKSKLAKSSFDMSTSGALQPCSKE) is disordered. A compositionally biased stretch (basic and acidic residues) spans 215–226 (RKNDSVDNEKSK). Positions 236–375 (TSGALQPCSK…SVKPKRILRP (140 aa)) constitute a PADR1 zinc-binding domain. Positions 301–345 (GPLALCPMCSGHLSFSGGLYRCHGYISEWSKCSHSTLDPDRIKGK) are zinc ribbon. The Zn(2+) site is built by Cys306, Cys309, Cys322, and Cys332. The interval 369–397 (PKRILRPVLSGETSQGQGSKDATDSSRSE) is disordered. Residues 379 to 388 (GETSQGQGSK) are compositionally biased toward polar residues. The BRCT domain occupies 394 to 484 (SRSERLADLK…RKLPFDKYKI (91 aa)). The 101-residue stretch at 511 to 611 (HCHILEDGNS…TNFQKQPGKF (101 aa)) folds into the WGR domain. The PARP alpha-helical domain occupies 633 to 751 (SSNLAPSLIE…DIEIASRIVG (119 aa)). Residues 758 to 983 (ESLDDKYKKL…LLKVRFKHKR (226 aa)) enclose the PARP catalytic domain.

The protein belongs to the ARTD/PARP family.

It localises to the nucleus. It catalyses the reaction NAD(+) + (ADP-D-ribosyl)n-acceptor = nicotinamide + (ADP-D-ribosyl)n+1-acceptor + H(+).. The catalysed reaction is L-aspartyl-[protein] + NAD(+) = 4-O-(ADP-D-ribosyl)-L-aspartyl-[protein] + nicotinamide. The enzyme catalyses L-glutamyl-[protein] + NAD(+) = 5-O-(ADP-D-ribosyl)-L-glutamyl-[protein] + nicotinamide. Functionally, involved in the base excision repair (BER) pathway, by catalyzing the poly(ADP-ribosyl)ation of a limited number of acceptor proteins involved in chromatin architecture and in DNA metabolism. This modification follows DNA damages and appears as an obligatory step in a detection/signaling pathway leading to the reparation of DNA strand breaks. The polypeptide is Poly [ADP-ribose] polymerase 1 (PARP1) (Arabidopsis thaliana (Mouse-ear cress)).